We begin with the raw amino-acid sequence, 627 residues long: Zinc finger MYM-type protein 5 (627 aa).

The tract at residues 1–23 (MEAHLADMESSGGPTSSLAGTSR) is disordered. Positions 12–23 (GGPTSSLAGTSR) are enriched in polar residues. Lys-59 is covalently cross-linked (Glycyl lysine isopeptide (Lys-Gly) (interchain with G-Cter in SUMO2)). The tract at residues 91–123 (DDEGDTDTNGGEEKNPTDFIEWGPNGNKSSTKN) is disordered. Residues Lys-137 and Lys-195 each participate in a glycyl lysine isopeptide (Lys-Gly) (interchain with G-Cter in SUMO2) cross-link. The segment at 234–268 (HLFCSTTCLSSFSHKRTRKTRNVMCKKDSPVRTTT) adopts an MYM-type 1 zinc-finger fold. The MYM-type 2; degenerate zinc finger occupies 280-319 (QGFYNASLSPYENCQSLRKEVFTKSRCIICNKLGEVRHEI). MYM-type zinc fingers lie at residues 326-354 (HKLC…CSKY) and 370-396 (KRFC…LLQN). The segment at 405–429 (ENEKRLRESSGTLSGNTGDIPEKKE) is disordered. Residues Lys-408, Lys-427, and Lys-517 each participate in a glycyl lysine isopeptide (Lys-Gly) (interchain with G-Cter in SUMO2) cross-link.

Interacts (via N-terminal 120 amino acid region) with ETV5 (via C-terminal).

It localises to the nucleus. In terms of biological role, functions as a transcriptional regulator. In Mus musculus (Mouse), this protein is Zinc finger MYM-type protein 5 (Zmym5).